Here is a 227-residue protein sequence, read N- to C-terminus: UPF0173 metal-dependent hydrolase BCQ_4418 (227 aa).

Belongs to the UPF0173 family.

This chain is UPF0173 metal-dependent hydrolase BCQ_4418, found in Bacillus cereus (strain Q1).